Reading from the N-terminus, the 379-residue chain is 1-deoxy-D-xylulose 5-phosphate reductoisomerase (379 aa).

5 residues coordinate NADPH: Thr10, Gly11, Ser12, Val13, and Asn121. Lys122 is a 1-deoxy-D-xylulose 5-phosphate binding site. Glu123 lines the NADPH pocket. Asp147 contacts Mn(2+). Positions 148, 149, 173, and 196 each coordinate 1-deoxy-D-xylulose 5-phosphate. Glu149 lines the Mn(2+) pocket. Gly202 contacts NADPH. Ser209, Asn214, Lys215, and Glu218 together coordinate 1-deoxy-D-xylulose 5-phosphate. Glu218 is a binding site for Mn(2+).

This sequence belongs to the DXR family. Requires Mg(2+) as cofactor. Mn(2+) is required as a cofactor.

It catalyses the reaction 2-C-methyl-D-erythritol 4-phosphate + NADP(+) = 1-deoxy-D-xylulose 5-phosphate + NADPH + H(+). It participates in isoprenoid biosynthesis; isopentenyl diphosphate biosynthesis via DXP pathway; isopentenyl diphosphate from 1-deoxy-D-xylulose 5-phosphate: step 1/6. In terms of biological role, catalyzes the NADPH-dependent rearrangement and reduction of 1-deoxy-D-xylulose-5-phosphate (DXP) to 2-C-methyl-D-erythritol 4-phosphate (MEP). The chain is 1-deoxy-D-xylulose 5-phosphate reductoisomerase from Chlamydia abortus (strain DSM 27085 / S26/3) (Chlamydophila abortus).